We begin with the raw amino-acid sequence, 321 residues long: D-alanine--D-alanine ligase (321 aa).

The 195-residue stretch at 121 to 315 (RSWFLTNNIN…FTNLIEEIIK (195 aa)) folds into the ATP-grasp domain. 147–199 (PMKRPYVIKPLTQGSSIGVEVIFAEDNFNFADYDFPYGDQVIIEQYIKGRELQ) contributes to the ATP binding site. Positions 268, 282, and 284 each coordinate Mg(2+).

This sequence belongs to the D-alanine--D-alanine ligase family. Mg(2+) is required as a cofactor. The cofactor is Mn(2+).

It localises to the cytoplasm. The enzyme catalyses 2 D-alanine + ATP = D-alanyl-D-alanine + ADP + phosphate + H(+). It functions in the pathway cell wall biogenesis; peptidoglycan biosynthesis. Functionally, cell wall formation. In Rickettsia massiliae (strain Mtu5), this protein is D-alanine--D-alanine ligase.